Reading from the N-terminus, the 459-residue chain is Argininosuccinate lyase (459 aa).

It belongs to the lyase 1 family. Argininosuccinate lyase subfamily.

It is found in the cytoplasm. It carries out the reaction 2-(N(omega)-L-arginino)succinate = fumarate + L-arginine. Its pathway is amino-acid biosynthesis; L-arginine biosynthesis; L-arginine from L-ornithine and carbamoyl phosphate: step 3/3. The polypeptide is Argininosuccinate lyase (Geobacillus kaustophilus (strain HTA426)).